The chain runs to 957 residues: Glycine dehydrogenase (decarboxylating) (957 aa).

An N6-(pyridoxal phosphate)lysine modification is found at Lys708.

This sequence belongs to the GcvP family. As to quaternary structure, the glycine cleavage system is composed of four proteins: P, T, L and H. Pyridoxal 5'-phosphate serves as cofactor.

It carries out the reaction N(6)-[(R)-lipoyl]-L-lysyl-[glycine-cleavage complex H protein] + glycine + H(+) = N(6)-[(R)-S(8)-aminomethyldihydrolipoyl]-L-lysyl-[glycine-cleavage complex H protein] + CO2. The glycine cleavage system catalyzes the degradation of glycine. The P protein binds the alpha-amino group of glycine through its pyridoxal phosphate cofactor; CO(2) is released and the remaining methylamine moiety is then transferred to the lipoamide cofactor of the H protein. This is Glycine dehydrogenase (decarboxylating) from Klebsiella pneumoniae subsp. pneumoniae (strain ATCC 700721 / MGH 78578).